The chain runs to 741 residues: Translation initiation factor IF-2 (741 aa).

Basic and acidic residues-rich tracts occupy residues 48 to 74 (HQYR…DKPK) and 107 to 123 (KGKE…EKKA). The disordered stretch occupies residues 48–158 (HQYRPKAEKK…PQPAKKEKEL (111 aa)). Residues 127 to 139 (AKKKGKGPAKGKK) are compositionally biased toward basic residues. Residues 140–151 (QAAPAAKQVPQP) are compositionally biased toward low complexity. The region spanning 242-411 (ERPPVVTIMG…LLVSEMEELK (170 aa)) is the tr-type G domain. Positions 251-258 (GHVDHGKT) are G1. 251-258 (GHVDHGKT) contributes to the GTP binding site. A G2 region spans residues 276–280 (GITQH). Positions 297–300 (DTPG) are G3. Residues 297–301 (DTPGH) and 351–354 (NKMD) each bind GTP. Positions 351-354 (NKMD) are G4. The G5 stretch occupies residues 387–389 (SAK).

Belongs to the TRAFAC class translation factor GTPase superfamily. Classic translation factor GTPase family. IF-2 subfamily.

It localises to the cytoplasm. Its function is as follows. One of the essential components for the initiation of protein synthesis. Protects formylmethionyl-tRNA from spontaneous hydrolysis and promotes its binding to the 30S ribosomal subunits. Also involved in the hydrolysis of GTP during the formation of the 70S ribosomal complex. The protein is Translation initiation factor IF-2 (infB) of Geobacillus stearothermophilus (Bacillus stearothermophilus).